The chain runs to 241 residues: Probable septum site-determining protein MinC (241 aa).

It belongs to the MinC family. As to quaternary structure, interacts with MinD and FtsZ.

In terms of biological role, cell division inhibitor that blocks the formation of polar Z ring septums. Rapidly oscillates between the poles of the cell to destabilize FtsZ filaments that have formed before they mature into polar Z rings. Prevents FtsZ polymerization. The polypeptide is Probable septum site-determining protein MinC (Rhizobium rhizogenes (strain K84 / ATCC BAA-868) (Agrobacterium radiobacter)).